The sequence spans 841 residues: Protein translocase subunit SecA (841 aa).

ATP is bound by residues Gln-85, 103 to 107 (GEGKT), and Asp-492. Residues 790–814 (IQGQTTAHQPKEGDEEKQAKKKPVR) are disordered. Over residues 798-807 (QPKEGDEEKQ) the composition is skewed to basic and acidic residues. Residues Cys-825, Cys-827, Cys-836, and Cys-837 each coordinate Zn(2+).

It belongs to the SecA family. Monomer and homodimer. Part of the essential Sec protein translocation apparatus which comprises SecA, SecYEG and auxiliary proteins SecDF. Other proteins may also be involved. Zn(2+) serves as cofactor.

Its subcellular location is the cell membrane. The protein localises to the cytoplasm. It catalyses the reaction ATP + H2O + cellular proteinSide 1 = ADP + phosphate + cellular proteinSide 2.. Its function is as follows. Part of the Sec protein translocase complex. Interacts with the SecYEG preprotein conducting channel. Has a central role in coupling the hydrolysis of ATP to the transfer of proteins into and across the cell membrane, serving as an ATP-driven molecular motor driving the stepwise translocation of polypeptide chains across the membrane. This is Protein translocase subunit SecA from Bacillus licheniformis (strain ATCC 14580 / DSM 13 / JCM 2505 / CCUG 7422 / NBRC 12200 / NCIMB 9375 / NCTC 10341 / NRRL NRS-1264 / Gibson 46).